We begin with the raw amino-acid sequence, 210 residues long: Chorismate pyruvate-lyase (210 aa).

The protein belongs to the chorismate pyruvate-lyase type 2 family.

The catalysed reaction is chorismate = 4-hydroxybenzoate + pyruvate. Its function is as follows. Removes the pyruvyl group from chorismate to provide 4-hydroxybenzoate (4HB). Involved in the synthesis of glycosylated p-hydroxybenzoic acid methyl esters (p-HBADs) and phenolic glycolipids (PGL) that play important roles in the pathogenesis of mycobacterial infections. This is Chorismate pyruvate-lyase from Mycobacterium leprae (strain TN).